A 1683-amino-acid polypeptide reads, in one-letter code: ABC transporter 7 (1683 aa).

The chain crosses the membrane as a helical span at residues Asp24 to Phe44. Residues Arg53–Asp93 form a disordered region. A compositionally biased stretch (acidic residues) spans Ser81 to Asp93. Transmembrane regions (helical) follow at residues Leu127 to Leu147, Thr157 to Leu177, His190 to Phe210, and Leu221 to Ile241. Asn247 is a glycosylation site (N-linked (GlcNAc...) asparagine). Helical transmembrane passes span Gly336 to Leu356 and Ser368 to Asp388. The 327-residue stretch at Ala338 to Glu664 folds into the ABC transmembrane type-1 1 domain. The segment at Gly451 to Gln473 is disordered. Residue Asn489 is glycosylated (N-linked (GlcNAc...) asparagine). Helical transmembrane passes span Tyr496–Tyr516 and Val518–Ile538. N-linked (GlcNAc...) asparagine glycosylation is present at Asn545. The next 2 membrane-spanning stretches (helical) occupy residues Val602 to Phe622 and Pro632 to Leu648. In terms of domain architecture, ABC transporter 1 spans Ile700–Lys949. Gly742–Thr749 provides a ligand contact to ATP. Positions Ser952–Glu998 are disordered. Asn956 carries N-linked (GlcNAc...) asparagine glycosylation. The helical transmembrane segment at Leu1016–Ser1036 threads the bilayer. The ABC transmembrane type-1 2 domain maps to Val1028–Ser1351. Asn1097 carries N-linked (GlcNAc...) asparagine glycosylation. The next 3 helical transmembrane spans lie at Ala1111–Leu1131, Val1182–Val1202, and Val1204–Ala1224. Asn1277 carries N-linked (GlcNAc...) asparagine glycosylation. Transmembrane regions (helical) follow at residues Leu1304–Ile1324 and Gly1327–Val1347. Positions Val1392–Cys1649 constitute an ABC transporter 2 domain. Residues Asn1396 and Asn1411 are each glycosylated (N-linked (GlcNAc...) asparagine). Gly1426–Ser1433 is a binding site for ATP. 2 N-linked (GlcNAc...) asparagine glycosylation sites follow: Asn1541 and Asn1552.

It belongs to the ABC transporter superfamily.

The protein localises to the membrane. Functionally, ABC transporter; part of the gene cluster that mediates the biosynthesis of pyriculol and pyriculariol, two heptaketides that induce lesion formation upon application on rice leaves but are dispensable for pathogenicity. With the MFS transporter MFS1, is most likely responsible for pyriculol and pyriculariol secretion and thereby may contribute to intrinsic resistance. This is ABC transporter 7 from Pyricularia oryzae (strain 70-15 / ATCC MYA-4617 / FGSC 8958) (Rice blast fungus).